The primary structure comprises 101 residues: MGTRYFLALFLILLVLGFKVQGVAMAQEDEADSPGLLTRMQESLFSYWDTAKAAAQDLYQKTYLPTMDEKIRDIYNKSTAAVTTYAGIFTDQLLSLLKGDQ.

Residues 1–26 form the signal peptide; that stretch reads MGTRYFLALFLILLVLGFKVQGVAMA. A lipid binding region spans residues 66 to 74; that stretch reads TMDEKIRDI. The interval 78–101 is lipoprotein lipase cofactor; it reads STAAVTTYAGIFTDQLLSLLKGDQ.

It belongs to the apolipoprotein C2 family. Proapolipoprotein C-II is synthesized as a sialic acid containing glycoprotein which is subsequently desialylated prior to its proteolytic processing. In terms of processing, proapolipoprotein C-II undergoes proteolytic cleavage of its N-terminal hexapeptide to generate apolipoprotein C-II. In bovine, proapolipoprotein C-II was found to be the minor form whereas apolipoprotein C-II was found to be the major form in plasma.

The protein resides in the secreted. In terms of biological role, component of chylomicrons, very low-density lipoproteins (VLDL), low-density lipoproteins (LDL), and high-density lipoproteins (HDL) in plasma. Plays an important role in lipoprotein metabolism as an activator of lipoprotein lipase. Both proapolipoprotein C-II and apolipoprotein C-II can activate lipoprotein lipase. The sequence is that of Apolipoprotein C-II (APOC2) from Camelus dromedarius (Dromedary).